Consider the following 593-residue polypeptide: Kelch-like protein 2 (593 aa).

A disordered region spans residues 1–29; the sequence is MESPPLPPACTKQGHQKPLDSKDENPEKH. Basic and acidic residues predominate over residues 17–29; that stretch reads KPLDSKDENPEKH. Positions 56–123 constitute a BTB domain; it reads CDVTIVAEDM…VYTAEIQVTE (68 aa). Kelch repeat units lie at residues 308–353, 354–400, 402–447, 449–496, 497–543, and 545–591; these read LMVV…YMAG, LVFA…VLNG, LYAV…VVGG, LYAV…VLNN, LLYA…AVNG, and LYVV…VIDK.

In terms of assembly, component of the BCR(KLHL2) E3 ubiquitin ligase complex, at least composed of CUL3 and KLHL2 and RBX1. Binds actin. Interacts with KLHL12. Interacts (via N-terminus) with FYN (via SH3 domain). In terms of tissue distribution, detected in brain neurons, oligodendrocytes and astrocytes (at protein level).

Its subcellular location is the cytoplasm. The protein resides in the cytoskeleton. It localises to the cell projection. The protein localises to the ruffle. It is found in the lamellipodium. Its subcellular location is the cytosol. The protein operates within protein modification; protein ubiquitination. In terms of biological role, substrate-specific adapter of a BCR (BTB-CUL3-RBX1) E3 ubiquitin ligase complex that mediates the ubiquitination of target proteins, such as NPTXR, WNK1, WNK3 and WNK4, leading most often to their proteasomal degradation. The BCR(KLHL2) complex catalyzes ubiquitination and degradation of NPTXR. Responsible for degradative ubiquitination of the WNK kinases WNK1, WNK3 and WNK4. Plays a role in the reorganization of the actin cytoskeleton. Promotes growth of cell projections in oligodendrocyte precursors. This is Kelch-like protein 2 from Rattus norvegicus (Rat).